Consider the following 377-residue polypeptide: Nitric oxide reductase FlRd-NAD(+) reductase (377 aa).

The protein belongs to the FAD-dependent oxidoreductase family. Requires FAD as cofactor.

It is found in the cytoplasm. It catalyses the reaction 2 reduced [nitric oxide reductase rubredoxin domain] + NAD(+) + H(+) = 2 oxidized [nitric oxide reductase rubredoxin domain] + NADH. Its pathway is nitrogen metabolism; nitric oxide reduction. Its function is as follows. One of at least two accessory proteins for anaerobic nitric oxide (NO) reductase. Reduces the rubredoxin moiety of NO reductase. This is Nitric oxide reductase FlRd-NAD(+) reductase from Salmonella newport (strain SL254).